A 391-amino-acid polypeptide reads, in one-letter code: MSLNPRDVVIVDFGRTPMGRSKGGMHRNTRAEDMSAHLISKLLERNNKVDPAEVEDVIWGCVNQTLEQGWNIARMASLLTQIPHTSAAQTVSRLCGSSMSALHTAAQAIMTNNGDVFIIGGVEHMGHVSMMHGVDPNPHMSLHAAKASGMMGLTAEMLGKMHGITREQQDAFGLRSHQLAHKATLEGKFKDEIIPMQGYDENGFLKVFDYDETIRPDTTLESLAALKPAFNPKGGTVTAGTSSQITDGASCMIVMSAQRAQDLGIQPMAVIRSMAVAGVDPAIMGYGPVPATQKALKRAGLSIADIDFFELNEAFAAQALPVLKDLKVLDKMNEKVNLHGGAIALGHPFGCSGARISGTLLNVMKQNGGTFGVSTMCIGLGQGIATVFERV.

Cys95 acts as the Acyl-thioester intermediate in catalysis. Active-site proton acceptor residues include His347 and Cys377.

Belongs to the thiolase-like superfamily. Thiolase family. In terms of assembly, heterotetramer of two alpha chains (FadB) and two beta chains (FadA).

It localises to the cytoplasm. It catalyses the reaction an acyl-CoA + acetyl-CoA = a 3-oxoacyl-CoA + CoA. Its pathway is lipid metabolism; fatty acid beta-oxidation. Functionally, catalyzes the final step of fatty acid oxidation in which acetyl-CoA is released and the CoA ester of a fatty acid two carbons shorter is formed. The protein is 3-ketoacyl-CoA thiolase of Pseudomonas syringae pv. syringae (strain B728a).